Reading from the N-terminus, the 334-residue chain is HTH-type transcriptional repressor PurR (334 aa).

Residues 2-56 form the HTH lacI-type domain; it reads ATIKDVAKMAGVSTTTVSHVINKTRHVADETKQTVLDAIKALNYSPSAVARSLKV. Residues 4 to 23 constitute a DNA-binding region (H-T-H motif); that stretch reads IKDVAKMAGVSTTTVSHVIN. Residues 48–56 mediate DNA binding; that stretch reads SAVARSLKV. Residues tyrosine 73, lysine 189, threonine 191, phenylalanine 220, and aspartate 274 each contribute to the hypoxanthine site.

Homodimer.

Its pathway is purine metabolism; purine nucleotide biosynthesis [regulation]. In terms of biological role, is the main repressor of the genes involved in the de novo synthesis of purine nucleotides, regulating purB, purC, purEK, purF, purHD, purL, purMN and guaBA expression. PurR is allosterically activated to bind its cognate DNA by binding the purine corepressors, hypoxanthine or guanine, thereby effecting transcription repression. The polypeptide is HTH-type transcriptional repressor PurR (Mannheimia succiniciproducens (strain KCTC 0769BP / MBEL55E)).